We begin with the raw amino-acid sequence, 92 residues long: Small ribosomal subunit protein bS20 (92 aa).

2 disordered regions span residues 1 to 25 (MALR…NRAK) and 68 to 92 (HKNA…AQQA). Residues 80–92 (AKAINKAKAAQQA) are compositionally biased toward low complexity.

Belongs to the bacterial ribosomal protein bS20 family.

Binds directly to 16S ribosomal RNA. This is Small ribosomal subunit protein bS20 from Deinococcus radiodurans (strain ATCC 13939 / DSM 20539 / JCM 16871 / CCUG 27074 / LMG 4051 / NBRC 15346 / NCIMB 9279 / VKM B-1422 / R1).